The primary structure comprises 555 residues: Acetyl-coenzyme A thioesterase (555 aa).

Residues 5–117 (APGEVVMSQA…FSTFVAKPVG (113 aa)) form the HotDog ACOT-type 1 domain. N6-succinyllysine is present on lysine 33. CoA is bound by residues 53-55 (TAS), 82-84 (STS), and arginine 144. N6-succinyllysine is present on residues lysine 159 and lysine 228. Positions 179-294 (RGTSVQSIEL…FLIYNAADDK (116 aa)) constitute a HotDog ACOT-type 2 domain. CoA is bound at residue 234-236 (KFR). In terms of domain architecture, START spans 340-549 (CIHWDISKQA…IQFLENPPDD (210 aa)).

Homodimer or homotetramer.

Its subcellular location is the cytoplasm. The protein resides in the cytosol. The catalysed reaction is acetyl-CoA + H2O = acetate + CoA + H(+). It carries out the reaction butanoyl-CoA + H2O = butanoate + CoA + H(+). The enzyme catalyses hexanoyl-CoA + H2O = hexanoate + CoA + H(+). The protein operates within lipid metabolism; fatty acid metabolism. With respect to regulation, inhibited by ADP. Active in the presence of ATP. Cold labile, it dissociates into inactive monomers at low temperature. Catalyzes the hydrolysis of acyl-CoAs into free fatty acids and coenzyme A (CoASH), regulating their respective intracellular levels. Preferentially hydrolyzes acetyl-CoA. The chain is Acetyl-coenzyme A thioesterase (ACOT12) from Homo sapiens (Human).